Reading from the N-terminus, the 1405-residue chain is DNA-directed RNA polymerase subunit beta' (1405 aa).

Residues cysteine 70, cysteine 72, cysteine 85, and cysteine 88 each contribute to the Zn(2+) site. Residues aspartate 460, aspartate 462, and aspartate 464 each contribute to the Mg(2+) site. Zn(2+) is bound by residues cysteine 814, cysteine 888, cysteine 895, and cysteine 898.

It belongs to the RNA polymerase beta' chain family. In terms of assembly, the RNAP catalytic core consists of 2 alpha, 1 beta, 1 beta' and 1 omega subunit. When a sigma factor is associated with the core the holoenzyme is formed, which can initiate transcription. It depends on Mg(2+) as a cofactor. Zn(2+) is required as a cofactor.

It catalyses the reaction RNA(n) + a ribonucleoside 5'-triphosphate = RNA(n+1) + diphosphate. DNA-dependent RNA polymerase catalyzes the transcription of DNA into RNA using the four ribonucleoside triphosphates as substrates. This chain is DNA-directed RNA polymerase subunit beta', found in Shewanella woodyi (strain ATCC 51908 / MS32).